The primary structure comprises 506 residues: UDP-N-acetylmuramoyl-L-alanyl-D-glutamate--2,6-diaminopimelate ligase (506 aa).

S42 contributes to the UDP-N-acetyl-alpha-D-muramoyl-L-alanyl-D-glutamate binding site. G125–T131 contacts ATP. UDP-N-acetyl-alpha-D-muramoyl-L-alanyl-D-glutamate is bound by residues T166–T167, S193, and R201. K233 bears the N6-carboxylysine mark. Residues R395, D419 to R422, G475, and E479 contribute to the meso-2,6-diaminopimelate site. The Meso-diaminopimelate recognition motif motif lies at D419–R422.

Belongs to the MurCDEF family. MurE subfamily. It depends on Mg(2+) as a cofactor. Post-translationally, carboxylation is probably crucial for Mg(2+) binding and, consequently, for the gamma-phosphate positioning of ATP.

The protein resides in the cytoplasm. The enzyme catalyses UDP-N-acetyl-alpha-D-muramoyl-L-alanyl-D-glutamate + meso-2,6-diaminopimelate + ATP = UDP-N-acetyl-alpha-D-muramoyl-L-alanyl-gamma-D-glutamyl-meso-2,6-diaminopimelate + ADP + phosphate + H(+). It functions in the pathway cell wall biogenesis; peptidoglycan biosynthesis. Its function is as follows. Catalyzes the addition of meso-diaminopimelic acid to the nucleotide precursor UDP-N-acetylmuramoyl-L-alanyl-D-glutamate (UMAG) in the biosynthesis of bacterial cell-wall peptidoglycan. The polypeptide is UDP-N-acetylmuramoyl-L-alanyl-D-glutamate--2,6-diaminopimelate ligase (Streptomyces coelicolor (strain ATCC BAA-471 / A3(2) / M145)).